The primary structure comprises 89 residues: MSRQVFCRKYQMEMEGLDFAPFPGAKGQEFFENVSKQAWQEWLQHQTTLINEKRLNVFEPEAKKFLEEQREKFFNNDESVEKAEGWKPE.

It belongs to the Fe(2+)-trafficking protein family.

In terms of biological role, could be a mediator in iron transactions between iron acquisition and iron-requiring processes, such as synthesis and/or repair of Fe-S clusters in biosynthetic enzymes. This Acinetobacter baumannii (strain SDF) protein is Probable Fe(2+)-trafficking protein.